The chain runs to 1072 residues: Carbamoyl phosphate synthase large chain (1072 aa).

The tract at residues 1 to 401 (MPKRLDINTI…SLLKAVRSLE (401 aa)) is carboxyphosphate synthetic domain. ATP-binding residues include R129, R169, G175, G176, K208, I210, E215, G241, V242, H243, Q284, and E298. An ATP-grasp 1 domain is found at 133 to 327 (RTLMQDLNEP…IAKLAAKIAV (195 aa)). Q284, E298, and N300 together coordinate Mg(2+). The Mn(2+) site is built by Q284, E298, and N300. Residues 402–546 (LGIYHLELDH…YSTYADENES (145 aa)) form an oligomerization domain region. Positions 547-929 (IVTDRKSVVV…ALYKGLVASG (383 aa)) are carbamoyl phosphate synthetic domain. The ATP-grasp 2 domain occupies 671 to 861 (EAALTKLGIP…MANVATKVIL (191 aa)). 9 residues coordinate ATP: R707, R746, E752, G777, V778, H779, S780, Q820, and E832. Residues Q820, E832, and N834 each coordinate Mg(2+). Mn(2+) contacts are provided by Q820, E832, and N834. The MGS-like domain occupies 930–1072 (INIPTHGSVI…QTKRHEVVHA (143 aa)). The segment at 930 to 1072 (INIPTHGSVI…QTKRHEVVHA (143 aa)) is allosteric domain.

Belongs to the CarB family. Composed of two chains; the small (or glutamine) chain promotes the hydrolysis of glutamine to ammonia, which is used by the large (or ammonia) chain to synthesize carbamoyl phosphate. Tetramer of heterodimers (alpha,beta)4. Requires Mg(2+) as cofactor. The cofactor is Mn(2+).

It catalyses the reaction hydrogencarbonate + L-glutamine + 2 ATP + H2O = carbamoyl phosphate + L-glutamate + 2 ADP + phosphate + 2 H(+). The enzyme catalyses hydrogencarbonate + NH4(+) + 2 ATP = carbamoyl phosphate + 2 ADP + phosphate + 2 H(+). It functions in the pathway amino-acid biosynthesis; L-arginine biosynthesis; carbamoyl phosphate from bicarbonate: step 1/1. Its pathway is pyrimidine metabolism; UMP biosynthesis via de novo pathway; (S)-dihydroorotate from bicarbonate: step 1/3. Functionally, large subunit of the glutamine-dependent carbamoyl phosphate synthetase (CPSase). CPSase catalyzes the formation of carbamoyl phosphate from the ammonia moiety of glutamine, carbonate, and phosphate donated by ATP, constituting the first step of 2 biosynthetic pathways, one leading to arginine and/or urea and the other to pyrimidine nucleotides. The large subunit (synthetase) binds the substrates ammonia (free or transferred from glutamine from the small subunit), hydrogencarbonate and ATP and carries out an ATP-coupled ligase reaction, activating hydrogencarbonate by forming carboxy phosphate which reacts with ammonia to form carbamoyl phosphate. This is Carbamoyl phosphate synthase large chain from Bacillus cereus (strain ATCC 14579 / DSM 31 / CCUG 7414 / JCM 2152 / NBRC 15305 / NCIMB 9373 / NCTC 2599 / NRRL B-3711).